The sequence spans 446 residues: Eukaryotic translation initiation factor 3 subunit E (446 aa).

Residues 256 to 425 (TDLFFSPAYI…GTVIMNHPPQ (170 aa)) enclose the PCI domain.

It belongs to the eIF-3 subunit E family. In terms of assembly, component of the eukaryotic translation initiation factor 3 (eIF-3) complex.

Its subcellular location is the cytoplasm. Functionally, component of the eukaryotic translation initiation factor 3 (eIF-3) complex, which is involved in protein synthesis of a specialized repertoire of mRNAs and, together with other initiation factors, stimulates binding of mRNA and methionyl-tRNAi to the 40S ribosome. The eIF-3 complex specifically targets and initiates translation of a subset of mRNAs involved in cell proliferation. The chain is Eukaryotic translation initiation factor 3 subunit E (int6) from Aspergillus terreus (strain NIH 2624 / FGSC A1156).